We begin with the raw amino-acid sequence, 664 residues long: Methionine--tRNA ligase (664 aa).

The short motif at 15-25 (YYPSGKLHIGH) is the 'HIGH' region element. Residues 311–315 (KMSKS) carry the 'KMSKS' region motif. ATP is bound at residue K314. Residues 536–556 (MQGSAPAKEETKEEEPQEVDR) are disordered. One can recognise a tRNA-binding domain in the interval 570 to 662 (LRVAEVIEAE…IDQSLPKGTR (93 aa)).

The protein belongs to the class-I aminoacyl-tRNA synthetase family. MetG type 2B subfamily. Homodimer.

It is found in the cytoplasm. The enzyme catalyses tRNA(Met) + L-methionine + ATP = L-methionyl-tRNA(Met) + AMP + diphosphate. In terms of biological role, is required not only for elongation of protein synthesis but also for the initiation of all mRNA translation through initiator tRNA(fMet) aminoacylation. The polypeptide is Methionine--tRNA ligase (metG) (Bacillus subtilis (strain 168)).